The primary structure comprises 147 residues: UPF0306 protein YhbP (147 aa).

Belongs to the UPF0306 family.

This is UPF0306 protein YhbP from Escherichia coli O157:H7.